The following is a 161-amino-acid chain: Cytochrome c-type biogenesis protein CcmE (161 aa).

The Cytoplasmic segment spans residues 1–8; sequence MNPRRKKR. Residues 9-29 traverse the membrane as a helical; Signal-anchor for type II membrane protein segment; it reads LTLAIALIGGVAAIASLLLYA. The Periplasmic segment spans residues 30–161; that stretch reads LNSNLNLFYT…DYSQQKSAAQ (132 aa). Heme-binding residues include histidine 131 and tyrosine 135. The segment at 138–161 is disordered; sequence PEVAEAMGQKHEKLDYSQQKSAAQ.

It belongs to the CcmE/CycJ family.

It localises to the cell inner membrane. In terms of biological role, heme chaperone required for the biogenesis of c-type cytochromes. Transiently binds heme delivered by CcmC and transfers the heme to apo-cytochromes in a process facilitated by CcmF and CcmH. In Shewanella sp. (strain MR-4), this protein is Cytochrome c-type biogenesis protein CcmE.